A 512-amino-acid polypeptide reads, in one-letter code: ATP synthase subunit beta 2 (512 aa).

174–181 contacts ATP; the sequence is GGAGVGKT. Positions 479–494 are enriched in basic and acidic residues; the sequence is RRKEEAAREADARRDA. The interval 479–512 is disordered; that stretch reads RRKEEAAREADARRDAAAGAASGSAGPQGAQHGR.

Belongs to the ATPase alpha/beta chains family. In terms of assembly, F-type ATPases have 2 components, CF(1) - the catalytic core - and CF(0) - the membrane proton channel. CF(1) has five subunits: alpha(3), beta(3), gamma(1), delta(1), epsilon(1). CF(0) has three main subunits: a(1), b(2) and c(9-12). The alpha and beta chains form an alternating ring which encloses part of the gamma chain. CF(1) is attached to CF(0) by a central stalk formed by the gamma and epsilon chains, while a peripheral stalk is formed by the delta and b chains.

The protein localises to the cell inner membrane. The catalysed reaction is ATP + H2O + 4 H(+)(in) = ADP + phosphate + 5 H(+)(out). In terms of biological role, produces ATP from ADP in the presence of a proton gradient across the membrane. The catalytic sites are hosted primarily by the beta subunits. This is ATP synthase subunit beta 2 from Burkholderia thailandensis (strain ATCC 700388 / DSM 13276 / CCUG 48851 / CIP 106301 / E264).